The chain runs to 59 residues: Large ribosomal subunit protein uL30 (59 aa).

This sequence belongs to the universal ribosomal protein uL30 family. In terms of assembly, part of the 50S ribosomal subunit.

The sequence is that of Large ribosomal subunit protein uL30 from Haemophilus influenzae (strain 86-028NP).